The sequence spans 210 residues: Large ribosomal subunit protein uL4 (210 aa).

Belongs to the universal ribosomal protein uL4 family. Part of the 50S ribosomal subunit.

In terms of biological role, one of the primary rRNA binding proteins, this protein initially binds near the 5'-end of the 23S rRNA. It is important during the early stages of 50S assembly. It makes multiple contacts with different domains of the 23S rRNA in the assembled 50S subunit and ribosome. Its function is as follows. Forms part of the polypeptide exit tunnel. This is Large ribosomal subunit protein uL4 (rplD) from Thermus thermophilus.